A 177-amino-acid chain; its full sequence is ATP synthase subunit delta (177 aa).

The protein belongs to the ATPase delta chain family. In terms of assembly, F-type ATPases have 2 components, F(1) - the catalytic core - and F(0) - the membrane proton channel. F(1) has five subunits: alpha(3), beta(3), gamma(1), delta(1), epsilon(1). F(0) has three main subunits: a(1), b(2) and c(10-14). The alpha and beta chains form an alternating ring which encloses part of the gamma chain. F(1) is attached to F(0) by a central stalk formed by the gamma and epsilon chains, while a peripheral stalk is formed by the delta and b chains.

Its subcellular location is the cell membrane. F(1)F(0) ATP synthase produces ATP from ADP in the presence of a proton or sodium gradient. F-type ATPases consist of two structural domains, F(1) containing the extramembraneous catalytic core and F(0) containing the membrane proton channel, linked together by a central stalk and a peripheral stalk. During catalysis, ATP synthesis in the catalytic domain of F(1) is coupled via a rotary mechanism of the central stalk subunits to proton translocation. Functionally, this protein is part of the stalk that links CF(0) to CF(1). It either transmits conformational changes from CF(0) to CF(1) or is implicated in proton conduction. This Buchnera aphidicola subsp. Schizaphis graminum (strain Sg) protein is ATP synthase subunit delta.